The sequence spans 442 residues: D-serine dehydratase (442 aa).

N6-(pyridoxal phosphate)lysine is present on lysine 118.

Belongs to the serine/threonine dehydratase family. DsdA subfamily. In terms of assembly, monomer. Pyridoxal 5'-phosphate is required as a cofactor.

It catalyses the reaction D-serine = pyruvate + NH4(+). This Shigella flexneri serotype 5b (strain 8401) protein is D-serine dehydratase.